The following is a 156-amino-acid chain: VapC ribonuclease AF_1683 (156 aa).

Residues 4 to 125 enclose the PINc domain; the sequence is LIDTGIFFGF…KLISYDSRFS (122 aa). Mg(2+) contacts are provided by Asp-6 and Asp-103.

Belongs to the PINc/VapC protein family. Mg(2+) serves as cofactor.

Its function is as follows. Toxic component of a type II toxin-antitoxin (TA) system. An RNase. The chain is VapC ribonuclease AF_1683 from Archaeoglobus fulgidus (strain ATCC 49558 / DSM 4304 / JCM 9628 / NBRC 100126 / VC-16).